Reading from the N-terminus, the 217-residue chain is Adenylate kinase (217 aa).

Position 10–15 (10–15) interacts with ATP; sequence GAGKGT. Positions 30-59 are NMP; the sequence is STGDILRAAVSEMTPMGVKAKGYMESGALV. AMP contacts are provided by residues threonine 31, arginine 36, 57–59, 85–88, and glutamine 92; these read ALV and GFPR. Residues 126-163 form an LID region; that stretch reads GRRTCRLCGKGYHVVFDPPRVSGRCDECLGELFQRDDD. Arginine 127 lines the ATP pocket. Zn(2+) is bound by residues cysteine 130, cysteine 133, cysteine 150, and cysteine 153. AMP is bound by residues arginine 160 and arginine 171. Glycine 199 contacts ATP.

It belongs to the adenylate kinase family. Monomer.

It localises to the cytoplasm. The enzyme catalyses AMP + ATP = 2 ADP. It functions in the pathway purine metabolism; AMP biosynthesis via salvage pathway; AMP from ADP: step 1/1. Its function is as follows. Catalyzes the reversible transfer of the terminal phosphate group between ATP and AMP. Plays an important role in cellular energy homeostasis and in adenine nucleotide metabolism. The chain is Adenylate kinase from Geotalea uraniireducens (strain Rf4) (Geobacter uraniireducens).